A 774-amino-acid polypeptide reads, in one-letter code: Ion-translocating oxidoreductase complex subunit C (774 aa).

2 4Fe-4S ferredoxin-type domains span residues 369–397 (GEPQEEQSCIRCSACADACPADLLPQQLY) and 407–436 (KATTHNIADCIECGACAWVCPSNIPLVQYF). Residues Cys-377, Cys-380, Cys-383, Cys-387, Cys-416, Cys-419, Cys-422, and Cys-426 each contribute to the [4Fe-4S] cluster site. The disordered stretch occupies residues 602–750 (KLEQQQANAE…EPEEQIDPRK (149 aa)).

Belongs to the 4Fe4S bacterial-type ferredoxin family. RnfC subfamily. As to quaternary structure, the complex is composed of six subunits: RsxA, RsxB, RsxC, RsxD, RsxE and RsxG. It depends on [4Fe-4S] cluster as a cofactor.

It localises to the cell inner membrane. In terms of biological role, part of a membrane-bound complex that couples electron transfer with translocation of ions across the membrane. Required to maintain the reduced state of SoxR. This is Ion-translocating oxidoreductase complex subunit C from Escherichia coli O6:K15:H31 (strain 536 / UPEC).